A 259-amino-acid chain; its full sequence is Undecaprenyl-diphosphatase 4 (259 aa).

8 consecutive transmembrane segments (helical) span residues 1–21, 39–59, 71–91, 99–119, 133–153, 174–194, 208–228, and 239–259; these read MNWL…FLPI, AGLF…FIYY, FSKL…IGLL, ISKT…FLYM, ITYK…FPAI, AYFS…LQFV, SLIV…SWMI, and FAYY…TDVF.

It belongs to the UppP family.

The protein resides in the cell membrane. The enzyme catalyses di-trans,octa-cis-undecaprenyl diphosphate + H2O = di-trans,octa-cis-undecaprenyl phosphate + phosphate + H(+). Functionally, catalyzes the dephosphorylation of undecaprenyl diphosphate (UPP). Confers resistance to bacitracin. This chain is Undecaprenyl-diphosphatase 4, found in Bacillus cereus (strain ZK / E33L).